The primary structure comprises 170 residues: M-agglutinin (170 aa).

Residues 1–24 form the signal peptide; the sequence is MNLKKIAIASSVFAGITMALTCHA.

In terms of biological role, this protein is a non-fimbrial hemagglutinin that is specific for blood group M. The polypeptide is M-agglutinin (bmaE) (Escherichia coli).